The sequence spans 366 residues: Ribosomal RNA large subunit methyltransferase M (366 aa).

S-adenosyl-L-methionine-binding positions include Ser188, 221–224 (CPGG), Asp240, Asp260, and Asp277. Lys306 functions as the Proton acceptor in the catalytic mechanism.

It belongs to the class I-like SAM-binding methyltransferase superfamily. RNA methyltransferase RlmE family. RlmM subfamily. Monomer.

The protein resides in the cytoplasm. It carries out the reaction cytidine(2498) in 23S rRNA + S-adenosyl-L-methionine = 2'-O-methylcytidine(2498) in 23S rRNA + S-adenosyl-L-homocysteine + H(+). In terms of biological role, catalyzes the 2'-O-methylation at nucleotide C2498 in 23S rRNA. This is Ribosomal RNA large subunit methyltransferase M from Shigella sonnei (strain Ss046).